A 255-amino-acid polypeptide reads, in one-letter code: Fumarate reductase cytochrome b subunit (255 aa).

5 consecutive transmembrane segments (helical) span residues Thr33 to Ile53, Ile78 to Leu98, Trp126 to Val146, Phe168 to Tyr188, and Val208 to Ile228. Positions 44, 93, 143, and 182 each coordinate heme b.

It belongs to the diheme cytochrome b FrdC family. Part of an enzyme complex containing three subunits: a flavoprotein (frdA), an iron-sulfur protein (frdB), and diheme cytochrome b (frdC). Requires heme b as cofactor.

It localises to the cell inner membrane. Its function is as follows. The fumarate reductase enzyme complex is required for fumarate respiration. This subunit anchors the complex in the membrane and binds a diheme cytochrome b. The polypeptide is Fumarate reductase cytochrome b subunit (frdC) (Helicobacter pylori (strain ATCC 700392 / 26695) (Campylobacter pylori)).